Here is a 434-residue protein sequence, read N- to C-terminus: Gamma-enolase (434 aa).

Substrate is bound by residues His158 and Glu167. The active-site Proton donor is Glu210. Mg(2+)-binding residues include Asp245, Glu293, and Asp318. Substrate is bound by residues Glu293 and Asp318. Lys343 (proton acceptor) is an active-site residue. Substrate contacts are provided by residues 370–373 (SHRS) and Lys394.

It belongs to the enolase family. As to quaternary structure, homodimer. It depends on Mg(2+) as a cofactor. As to expression, expressed in the brain and, to much less but significant extents, in the pituitary and adrenal glands.

The protein localises to the cytoplasm. The catalysed reaction is (2R)-2-phosphoglycerate = phosphoenolpyruvate + H2O. It participates in carbohydrate degradation; glycolysis; pyruvate from D-glyceraldehyde 3-phosphate: step 4/5. In Gallus gallus (Chicken), this protein is Gamma-enolase (ENO2).